The following is a 250-amino-acid chain: Large ribosomal subunit protein uL30B (250 aa).

It belongs to the universal ribosomal protein uL30 family. Component of the large ribosomal subunit (LSU). Mature yeast ribosomes consist of a small (40S) and a large (60S) subunit. The 40S small subunit contains 1 molecule of ribosomal RNA (18S rRNA) and at least 33 different proteins. The large 60S subunit contains 3 rRNA molecules (25S, 5.8S and 5S rRNA) and at least 46 different proteins.

The protein localises to the cytoplasm. It localises to the nucleus. Its subcellular location is the nucleolus. Functionally, component of the ribosome, a large ribonucleoprotein complex responsible for the synthesis of proteins in the cell. The small ribosomal subunit (SSU) binds messenger RNAs (mRNAs) and translates the encoded message by selecting cognate aminoacyl-transfer RNA (tRNA) molecules. The large subunit (LSU) contains the ribosomal catalytic site termed the peptidyl transferase center (PTC), which catalyzes the formation of peptide bonds, thereby polymerizing the amino acids delivered by tRNAs into a polypeptide chain. The nascent polypeptides leave the ribosome through a tunnel in the LSU and interact with protein factors that function in enzymatic processing, targeting, and the membrane insertion of nascent chains at the exit of the ribosomal tunnel. This is Large ribosomal subunit protein uL30B (rpl702) from Schizosaccharomyces pombe (strain 972 / ATCC 24843) (Fission yeast).